A 147-amino-acid chain; its full sequence is Large ribosomal subunit protein bL9 (147 aa).

A disordered region spans residues 44–63; the sequence is VKTLDAQKRSEDKRKEQEKL. Residues 48 to 63 are compositionally biased toward basic and acidic residues; sequence DAQKRSEDKRKEQEKL.

The protein belongs to the bacterial ribosomal protein bL9 family.

In terms of biological role, binds to the 23S rRNA. The protein is Large ribosomal subunit protein bL9 of Brevibacillus brevis (strain 47 / JCM 6285 / NBRC 100599).